Reading from the N-terminus, the 619-residue chain is Keratin, type II cytoskeletal 1 (619 aa).

The interval 1–180 (MSRHFSSRSG…DPEIQKVKTR (180 aa)) is head. Arginine 12 is subject to Omega-N-methylarginine. Phosphoserine occurs at positions 18 and 21. The tract at residues 28–49 (QRRTTSSSVRHSGGGGGRFSGG) is disordered. Residues 39-49 (SGGGGGRFSGG) show a composition bias toward gly residues. An Omega-N-methylarginine modification is found at arginine 45. Serine 68 is subject to Phosphoserine. A coiled-coil region spans residues 173-477 (EIQKVKTRER…ELMNTKLALD (305 aa)). A coil 1A region spans residues 181–216 (EREQIKSLNNQFASFIDKVRFLEQQNQVLQTKWELL). In terms of domain architecture, IF rod spans 181 to 494 (EREQIKSLNN…TLLEGEESRM (314 aa)). The segment at 217 to 235 (QQVDTSTRTHSLEPYFENY) is linker 1. A coil 1B region spans residues 236–327 (ISNLRRRVDQ…TLYQAELSQM (92 aa)). An N6,N6-dimethyllysine modification is found at lysine 277. The interval 328–351 (QTQISETNVILSMDNNRSLDLDSI) is linker 12. Serine 345 is subject to Phosphoserine. Residues 352–490 (ISEVKAQYEE…ATYRTLLEGE (139 aa)) form a coil 2 region. The segment at 491-619 (ESRMSGECAP…VSTSYSRAVR (129 aa)) is tail. An omega-N-methylarginine mark is found at arginine 519 and arginine 575. The interval 559 to 619 (GGGGGGYGSS…VSTSYSRAVR (61 aa)) is disordered. The span at 573 to 595 (GHRGGSGGGSRSGGSSGGRGSSS) shows a compositional bias: gly residues. Low complexity predominate over residues 596 to 606 (GGIKTSSGSSS). The span at 607-619 (VKFVSTSYSRAVR) shows a compositional bias: polar residues.

This sequence belongs to the intermediate filament family. As to quaternary structure, heterotetramer of two type I and two type II keratins. Heterodimer with KRT10. Two heterodimers of KRT1 and KRT10 form a heterotetramer. Forms a heterodimer with KRT14; the interaction is more abundant in the absence of KRT5. Interacts with ITGB1 in the presence of RACK1 and SRC, and with RACK1. Interacts with C1QBP; the association represents a cell surface kininogen receptor. Interacts with EPPK1; interaction is dependent of higher-order structure of intermediate filament. Post-translationally, undergoes deimination of some arginine residues (citrullination).

The protein resides in the cell membrane. Its subcellular location is the cytoplasm. In terms of biological role, may regulate the activity of kinases such as PKC and SRC via binding to integrin beta-1 (ITB1) and the receptor of activated protein C kinase 1 (RACK1). In complex with C1QBP is a high affinity receptor for kininogen-1/HMWK. This chain is Keratin, type II cytoskeletal 1, found in Canis lupus familiaris (Dog).